Consider the following 174-residue polypeptide: Protein RESTRICTED TEV MOVEMENT 1 (174 aa).

The Jacalin-type lectin domain occupies 1–152 (MKIGPVGKHD…LQYIGVYLRP (152 aa)).

The protein belongs to the jacalin lectin family. As to quaternary structure, self-interacts. Interacts with RTM3. In terms of tissue distribution, expressed at low levels exclusively in phloem-associated cells (e.g. sieve elements and adjacent cells).

The protein localises to the cytoplasm. Functionally, required for the restriction of long-distance movement of the pathogenic tobacco etch virus (TEV) without causing a hypersensitive response or inducing systemic acquired resistance. The protein is Protein RESTRICTED TEV MOVEMENT 1 (RTM1) of Arabidopsis thaliana (Mouse-ear cress).